A 31-amino-acid chain; its full sequence is Cyclotide psybry B (31 aa).

A cross-link (cyclopeptide (Gly-Asn)) is located at residues 1–31 (GFNPCGETCWNKPTCHAPGCTCSIANICVRN). Disulfide bonds link C5-C20, C9-C22, and C15-C28.

This is a cyclic peptide.

In terms of biological role, probably participates in a plant defense mechanism. The polypeptide is Cyclotide psybry B (Psychotria brachyceras).